A 279-amino-acid chain; its full sequence is NAD kinase (279 aa).

The active-site Proton acceptor is Asp-57. NAD(+)-binding positions include 57-58 (DG), 133-134 (NE), Arg-159, Asp-161, and 172-177 (TAYNKS).

It belongs to the NAD kinase family. It depends on a divalent metal cation as a cofactor.

It localises to the cytoplasm. The enzyme catalyses NAD(+) + ATP = ADP + NADP(+) + H(+). Its function is as follows. Involved in the regulation of the intracellular balance of NAD and NADP, and is a key enzyme in the biosynthesis of NADP. Catalyzes specifically the phosphorylation on 2'-hydroxyl of the adenosine moiety of NAD to yield NADP. This is NAD kinase from Streptococcus pyogenes serotype M2 (strain MGAS10270).